The primary structure comprises 471 residues: 3-isopropylmalate dehydratase large subunit (471 aa).

The [4Fe-4S] cluster site is built by C349, C409, and C412.

The protein belongs to the aconitase/IPM isomerase family. LeuC type 1 subfamily. In terms of assembly, heterodimer of LeuC and LeuD. The cofactor is [4Fe-4S] cluster.

The enzyme catalyses (2R,3S)-3-isopropylmalate = (2S)-2-isopropylmalate. It participates in amino-acid biosynthesis; L-leucine biosynthesis; L-leucine from 3-methyl-2-oxobutanoate: step 2/4. Its function is as follows. Catalyzes the isomerization between 2-isopropylmalate and 3-isopropylmalate, via the formation of 2-isopropylmaleate. This chain is 3-isopropylmalate dehydratase large subunit, found in Aliivibrio salmonicida (strain LFI1238) (Vibrio salmonicida (strain LFI1238)).